Here is a 107-residue protein sequence, read N- to C-terminus: U1-lycotoxin-Ls1c (107 aa).

A signal peptide spans 1 to 20 (MMKVLVVVALLVTLISYSSS). The propeptide occupies 21–41 (EGIDDLEADELLSLMANEQTR). 4 disulfide bridges follow: C44/C59, C51/C68, C58/C86, and C70/C84.

Belongs to the neurotoxin 19 (CSTX) family. 04 (U1-Lctx) subfamily. Expressed by the venom gland.

It is found in the secreted. The protein is U1-lycotoxin-Ls1c of Lycosa singoriensis (Wolf spider).